The primary structure comprises 313 residues: tRNA-cytidine(32) 2-sulfurtransferase (313 aa).

The short motif at Ser-46–Ser-51 is the PP-loop motif element. [4Fe-4S] cluster is bound by residues Cys-121, Cys-124, and Cys-212.

The protein belongs to the TtcA family. In terms of assembly, homodimer. It depends on Mg(2+) as a cofactor. Requires [4Fe-4S] cluster as cofactor.

It is found in the cytoplasm. It carries out the reaction cytidine(32) in tRNA + S-sulfanyl-L-cysteinyl-[cysteine desulfurase] + AH2 + ATP = 2-thiocytidine(32) in tRNA + L-cysteinyl-[cysteine desulfurase] + A + AMP + diphosphate + H(+). Its pathway is tRNA modification. Its function is as follows. Catalyzes the ATP-dependent 2-thiolation of cytidine in position 32 of tRNA, to form 2-thiocytidine (s(2)C32). The sulfur atoms are provided by the cysteine/cysteine desulfurase (IscS) system. The polypeptide is tRNA-cytidine(32) 2-sulfurtransferase (Nitrosomonas eutropha (strain DSM 101675 / C91 / Nm57)).